We begin with the raw amino-acid sequence, 281 residues long: Probable endonuclease 4 (281 aa).

Zn(2+) contacts are provided by H69, H109, E145, D179, H182, H216, D229, H231, and E261.

It belongs to the AP endonuclease 2 family. Zn(2+) is required as a cofactor.

The enzyme catalyses Endonucleolytic cleavage to 5'-phosphooligonucleotide end-products.. Its function is as follows. Endonuclease IV plays a role in DNA repair. It cleaves phosphodiester bonds at apurinic or apyrimidinic (AP) sites, generating a 3'-hydroxyl group and a 5'-terminal sugar phosphate. This chain is Probable endonuclease 4, found in Proteus mirabilis (strain HI4320).